Here is a 400-residue protein sequence, read N- to C-terminus: Probable protein phosphatase 2C 64 (400 aa).

The region spanning 47–355 (DFSMAVVQAN…DDITVIVVFF (309 aa)) is the PPM-type phosphatase domain. At S75 the chain carries Phosphoserine. Mn(2+) is bound by residues D86, G87, D287, and D346.

This sequence belongs to the PP2C family. In terms of assembly, interacts with SAUR19. Requires Mg(2+) as cofactor. The cofactor is Mn(2+).

The enzyme catalyses O-phospho-L-seryl-[protein] + H2O = L-seryl-[protein] + phosphate. It catalyses the reaction O-phospho-L-threonyl-[protein] + H2O = L-threonyl-[protein] + phosphate. Dephosphorylates and represses plasma membrane H(+)-ATPases (PM H(+)-ATPases, e.g. AHA1 and AHA2), thus influencing negatively plant growth and fitness. The sequence is that of Probable protein phosphatase 2C 64 from Arabidopsis thaliana (Mouse-ear cress).